The sequence spans 302 residues: RNA polymerase II holoenzyme cyclin-like subunit (302 aa).

Positions 53–142 constitute a Cyclin N-terminal domain; it reads QQLIKLGKRM…LGECEFSLIS (90 aa).

This sequence belongs to the cyclin family. Cyclin C subfamily. In terms of assembly, component of the srb8-11 complex, a regulatory module of the Mediator complex.

The protein resides in the nucleus. In terms of biological role, component of the srb8-11 complex. The srb8-11 complex is a regulatory module of the Mediator complex which is itself involved in regulation of basal and activated RNA polymerase II-dependent transcription. The srb8-11 complex may be involved in the transcriptional repression of a subset of genes regulated by Mediator. It may inhibit the association of the Mediator complex with RNA polymerase II to form the holoenzyme complex. The srb8-11 complex phosphorylates the C-terminal domain (CTD) of the largest subunit of RNA polymerase II. In Aspergillus fumigatus (strain ATCC MYA-4609 / CBS 101355 / FGSC A1100 / Af293) (Neosartorya fumigata), this protein is RNA polymerase II holoenzyme cyclin-like subunit (ssn8).